Reading from the N-terminus, the 1261-residue chain is Pentatricopeptide repeat-containing protein 5, mitochondrial (1261 aa).

PPR repeat units lie at residues His-365–Thr-404, Asn-405–Ile-442, Pro-443–Ala-479, Ser-480–Asp-514, Thr-550–Leu-584, His-806–Asn-849, Met-852–Pro-886, Arg-887–Pro-924, Ser-925–Pro-959, Thr-960–Pro-995, Arg-996–Pro-1031, Ser-1032–Ile-1068, Asp-1109–Leu-1143, Asn-1144–Lys-1179, and Glu-1180–Leu-1214. The tract at residues Asn-1225–Asn-1261 is disordered. The segment covering Leu-1237–Asn-1261 has biased composition (polar residues).

It is found in the mitochondrion. In terms of biological role, mitochondrial RNA-binding protein that acts as a general negative regulator of mitochondrial translation. This is Pentatricopeptide repeat-containing protein 5, mitochondrial (ppr5) from Schizosaccharomyces pombe (strain 972 / ATCC 24843) (Fission yeast).